We begin with the raw amino-acid sequence, 342 residues long: RNA 3'-terminal phosphate cyclase (342 aa).

ATP-binding positions include glutamine 103 and 283 to 287; that span reads YLADQ. Histidine 308 serves as the catalytic Tele-AMP-histidine intermediate.

It belongs to the RNA 3'-terminal cyclase family. Type 1 subfamily.

The protein resides in the cytoplasm. The catalysed reaction is a 3'-end 3'-phospho-ribonucleotide-RNA + ATP = a 3'-end 2',3'-cyclophospho-ribonucleotide-RNA + AMP + diphosphate. Catalyzes the conversion of 3'-phosphate to a 2',3'-cyclic phosphodiester at the end of RNA. The mechanism of action of the enzyme occurs in 3 steps: (A) adenylation of the enzyme by ATP; (B) transfer of adenylate to an RNA-N3'P to produce RNA-N3'PP5'A; (C) and attack of the adjacent 2'-hydroxyl on the 3'-phosphorus in the diester linkage to produce the cyclic end product. The biological role of this enzyme is unknown but it is likely to function in some aspects of cellular RNA processing. This Escherichia coli O157:H7 protein is RNA 3'-terminal phosphate cyclase (rtcA).